A 255-amino-acid chain; its full sequence is tRNA (guanine-N(1)-)-methyltransferase (255 aa).

S-adenosyl-L-methionine-binding positions include Gly-117 and 137 to 142 (IGDYVL).

The protein belongs to the RNA methyltransferase TrmD family. Homodimer.

The protein resides in the cytoplasm. It carries out the reaction guanosine(37) in tRNA + S-adenosyl-L-methionine = N(1)-methylguanosine(37) in tRNA + S-adenosyl-L-homocysteine + H(+). Specifically methylates guanosine-37 in various tRNAs. This chain is tRNA (guanine-N(1)-)-methyltransferase, found in Glaesserella parasuis serovar 5 (strain SH0165) (Haemophilus parasuis).